A 419-amino-acid polypeptide reads, in one-letter code: MAKDKIVLAYSGGLDTSVAIKWLQDTYNYDVIAVALDVGEGKDLDFVQKKALQVGALKSIVVDAKDAFAEEFVLPALKANAMYEGKYPLVSALSRYLISRVLVEIAEKEGAVAVAHGCTGKGNDQVRFDVSFTALNPDIKIVAPVREWGWTRDEEIEYAKKNNIPIPIDLDNPYSIDQNLWGRSCECGVLEDPWAAPPEGAYDLTKSIMDAPDEAEEIEITFVQGKPTALNGEELPLAELILKLNKIAGNHGVGRIDHVENRLVGIKSREVYETPAATTLILAHRELEFLTQPREVAQFKPIVEQKLAQVIYEGLWFSPIRNAVQAFIEETQKHVTGVVRVKLHKGHAIVVGRTSASSLYSHELATYNAGDQFDHKAALGFIKLWGLPTKVYAQVNEGVLHENKNTAIKILDEKDAIKQ.

9–17 (AYSGGLDTS) is an ATP binding site. Y87 is a binding site for L-citrulline. Residue G117 participates in ATP binding. L-aspartate is bound by residues T119, N123, and D124. An L-citrulline-binding site is contributed by N123. 5 residues coordinate L-citrulline: R127, S175, S184, E260, and Y272.

The protein belongs to the argininosuccinate synthase family. Type 1 subfamily. As to quaternary structure, homotetramer.

The protein resides in the cytoplasm. The catalysed reaction is L-citrulline + L-aspartate + ATP = 2-(N(omega)-L-arginino)succinate + AMP + diphosphate + H(+). Its pathway is amino-acid biosynthesis; L-arginine biosynthesis; L-arginine from L-ornithine and carbamoyl phosphate: step 2/3. In Brevibacillus brevis (strain 47 / JCM 6285 / NBRC 100599), this protein is Argininosuccinate synthase.